A 108-amino-acid chain; its full sequence is Heme oxygenase (staphylobilin-producing) (108 aa).

In terms of domain architecture, ABM spans 2–93; it reads FMAENRLQLQ…DDDGQQSPIL (92 aa). N6 lines the Fe cation pocket. Heme contacts are provided by residues 21 to 28 and H76; that span reads RFYNRQGI.

It belongs to the antibiotic biosynthesis monooxygenase family. Heme-degrading monooxygenase IsdG subfamily. Homodimer.

The protein localises to the cytoplasm. It catalyses the reaction heme b + 5 AH2 + 4 O2 + 2 H(+) = delta-staphylobilin + Fe(2+) + formaldehyde + 5 A + 4 H2O. The enzyme catalyses heme b + 5 AH2 + 4 O2 + 2 H(+) = beta-staphylobilin + Fe(2+) + formaldehyde + 5 A + 4 H2O. In terms of biological role, allows bacterial pathogens to use the host heme as an iron source. Catalyzes the oxidative degradation of the heme macrocyclic porphyrin ring to the oxo-bilirubin chromophore staphylobilin (a mixture of the linear tetrapyrroles 5-oxo-delta-bilirubin and 15-oxo-beta-bilirubin) in the presence of a suitable electron donor such as ascorbate or NADPH--cytochrome P450 reductase, with subsequent release of free iron. The sequence is that of Heme oxygenase (staphylobilin-producing) (isdI) from Staphylococcus aureus (strain Mu3 / ATCC 700698).